Consider the following 522-residue polypeptide: Putative aminopeptidase W07G4.4 (522 aa).

Positions 271 and 276 each coordinate Zn(2+). K283 is a catalytic residue. Residues D294, D354, and E356 each contribute to the Zn(2+) site. The active site involves R358.

This sequence belongs to the peptidase M17 family. It depends on Zn(2+) as a cofactor.

In Caenorhabditis elegans, this protein is Putative aminopeptidase W07G4.4 (lap-2).